A 184-amino-acid polypeptide reads, in one-letter code: Threonylcarbamoyl-AMP synthase (184 aa).

Residues 1 to 184 (MNNLENIVEQ…IFTQHIFRQG (184 aa)) enclose the YrdC-like domain.

The protein belongs to the SUA5 family. TsaC subfamily.

The protein resides in the cytoplasm. It carries out the reaction L-threonine + hydrogencarbonate + ATP = L-threonylcarbamoyladenylate + diphosphate + H2O. Functionally, required for the formation of a threonylcarbamoyl group on adenosine at position 37 (t(6)A37) in tRNAs that read codons beginning with adenine. Catalyzes the conversion of L-threonine, HCO(3)(-)/CO(2) and ATP to give threonylcarbamoyl-AMP (TC-AMP) as the acyladenylate intermediate, with the release of diphosphate. This is Threonylcarbamoyl-AMP synthase from Actinobacillus pleuropneumoniae serotype 5b (strain L20).